Consider the following 327-residue polypeptide: Probable cell division protein WhiA (327 aa).

Positions 277 to 310 (EELGRLADPPMTKDAVAGRIRRLLSMADRKAKQD) form a DNA-binding region, H-T-H motif. The interval 304-327 (DRKAKQDGIPDTESAVTPDLLEDA) is disordered.

The protein belongs to the WhiA family.

Involved in cell division and chromosome segregation. This chain is Probable cell division protein WhiA, found in Mycolicibacterium vanbaalenii (strain DSM 7251 / JCM 13017 / BCRC 16820 / KCTC 9966 / NRRL B-24157 / PYR-1) (Mycobacterium vanbaalenii).